We begin with the raw amino-acid sequence, 200 residues long: Large ribosomal subunit protein uL13 (200 aa).

It belongs to the universal ribosomal protein uL13 family. Component of the large ribosomal subunit. Mature ribosomes consist of a small (40S) and a large (60S) subunit. The 40S subunit contains about 32 different proteins and 1 molecule of RNA (18S). The 60S subunit contains 45 different proteins and 3 molecules of RNA (25S, 5.8S and 5S).

The protein resides in the cytoplasm. Functionally, component of the ribosome, a large ribonucleoprotein complex responsible for the synthesis of proteins in the cell. The small ribosomal subunit (SSU) binds messenger RNAs (mRNAs) and translates the encoded message by selecting cognate aminoacyl-transfer RNA (tRNA) molecules. The large subunit (LSU) contains the ribosomal catalytic site termed the peptidyl transferase center (PTC), which catalyzes the formation of peptide bonds, thereby polymerizing the amino acids delivered by tRNAs into a polypeptide chain. The nascent polypeptides leave the ribosome through a tunnel in the LSU and interact with protein factors that function in enzymatic processing, targeting, and the membrane insertion of nascent chains at the exit of the ribosomal tunnel. The sequence is that of Large ribosomal subunit protein uL13 from Candida albicans (strain SC5314 / ATCC MYA-2876) (Yeast).